The sequence spans 475 residues: Ataxin-10 (475 aa).

Arginine 10 is modified (omega-N-methylarginine). Phosphoserine is present on residues serine 12 and serine 77. Residue threonine 82 is modified to Phosphothreonine. Residue serine 430 is modified to Phosphoserine.

The protein belongs to the ataxin-10 family. Homooligomer. Interacts with GNB2. Interacts with IQCB1. Interacts with OGT. In terms of processing, polyubiquitinated. Post-translationally, phosphorylation at Ser-12 by AURKB promotes the association of ATXN10 with PLK1. Phosphorylation at Ser-77 and Thr-82 by PLK1 may play a role in the regulation of cytokinesis and may stimulate the proteasome-mediated degradation of ATXN10.

Its subcellular location is the cytoplasm. The protein resides in the perinuclear region. The protein localises to the cytoskeleton. It is found in the cilium basal body. It localises to the microtubule organizing center. Its subcellular location is the centrosome. The protein resides in the centriole. The protein localises to the midbody. Functionally, may play a role in the regulation of cytokinesis. May play a role in signaling by stimulating protein glycosylation. Induces neuritogenesis by activating the Ras-MAP kinase pathway and is necessary for the survival of cerebellar neurons. Does not appear to play a major role in ciliogenesis. The polypeptide is Ataxin-10 (ATXN10) (Bos taurus (Bovine)).